Reading from the N-terminus, the 494-residue chain is Subtilisin-like serine protease EN45_078720 (494 aa).

The N-terminal stretch at 1 to 16 is a signal peptide; it reads MKGFLSLTLLPLLVAA. The propeptide at 17 to 136 is removed in mature form; that stretch reads SPVAVNSIHN…IEKDSEVRTM (120 aa). Positions 43-136 constitute an Inhibitor I9 domain; the sequence is SYIVVFKKHV…IEKDSEVRTM (94 aa). Residues 146–448 enclose the Peptidase S8 domain; sequence PWGLARISHR…GGSANYTKIL (303 aa). IgE-binding stretches follow at residues 180-198 and 209-231; these read VIDT…RANW and EDGN…GVAK. Active-site charge relay system residues include D182 and H214. N-linked (GlcNAc...) asparagine glycans are attached at residues N244 and N280. Residue S376 is the Charge relay system of the active site. N-linked (GlcNAc...) asparagine glycosylation is present at N443. Residues 454 to 494 constitute a propeptide, removed in mature form; it reads KAHNAETTVEDRIGGIIDSAEKAFHKELGAIYSEIKDAVSA.

Belongs to the peptidase S8 family.

Its function is as follows. Serine protease. This chain is Subtilisin-like serine protease EN45_078720, found in Penicillium chrysogenum (Penicillium notatum).